Consider the following 134-residue polypeptide: Insulin-like peptide 4 (134 aa).

Residues 1–26 (MSLIRLGLALLLLLATVSQLLQPVQG) form the signal peptide. Disulfide bonds link Cys31–Cys120, Cys43–Cys133, and Cys119–Cys124. The propeptide at 54–108 (SSASKDARVRDLIRKLQQPDEDIEQETETGRLKQKHTDADTEKGVPPAVGSGRKL) is connecting peptide. Residues 72 to 107 (PDEDIEQETETGRLKQKHTDADTEKGVPPAVGSGRK) are disordered. A compositionally biased stretch (basic and acidic residues) spans 81–96 (ETGRLKQKHTDADTEK).

This sequence belongs to the insulin family. As to quaternary structure, heterodimer of a B chain and an A chain linked by two disulfide bonds. In terms of tissue distribution, expressed at a high level in the embryonic mesoderm, with expression continuing after gastrulation and reducing from stage 12 onwards. Highly expressed in the embryonic anterior midgut rudiment and larval midgut.

The protein localises to the secreted. Possible ligand of InR/insulin-like receptor. The chain is Insulin-like peptide 4 from Drosophila melanogaster (Fruit fly).